Here is a 348-residue protein sequence, read N- to C-terminus: Probable UDP-arabinopyranose mutase 5 (348 aa).

The short motif at 100-102 (DDD) is the DXD motif element. The N-linked (Glc...) arginine glycan is linked to Arg148.

Belongs to the RGP family. In terms of assembly, heteromers with RGP1 and RGP2. Mn(2+) is required as a cofactor. The cofactor is Mg(2+). Post-translationally, reversibly glycosylated in vitro by UDP-glucose, UDP-xylose and UDP-galactose, but not UDP-mannose. Widely expressed at low levels.

The protein localises to the cytoplasm. Its subcellular location is the cytosol. It localises to the golgi apparatus. It catalyses the reaction UDP-beta-L-arabinofuranose = UDP-beta-L-arabinopyranose. Its function is as follows. Probable UDP-L-arabinose mutase involved in the biosynthesis of cell wall non-cellulosic polysaccharides. The polypeptide is Probable UDP-arabinopyranose mutase 5 (Arabidopsis thaliana (Mouse-ear cress)).